Here is a 280-residue protein sequence, read N- to C-terminus: Polyamine aminopropyltransferase 1 (280 aa).

One can recognise a PABS domain in the interval 3–237 (DIVFIERDPY…YWWTFSIASK (235 aa)). Gln33 is a binding site for S-methyl-5'-thioadenosine. His64 and Asp88 together coordinate spermidine. Residues Asp108 and 139-140 (DG) each bind S-methyl-5'-thioadenosine. Residue Asp157 is the Proton acceptor of the active site. Residue 157 to 160 (DSTD) coordinates spermidine.

Belongs to the spermidine/spermine synthase family. As to quaternary structure, homodimer or homotetramer.

It localises to the cytoplasm. The catalysed reaction is S-adenosyl 3-(methylsulfanyl)propylamine + putrescine = S-methyl-5'-thioadenosine + spermidine + H(+). The protein operates within amine and polyamine biosynthesis; spermidine biosynthesis; spermidine from putrescine: step 1/1. Functionally, catalyzes the irreversible transfer of a propylamine group from the amino donor S-adenosylmethioninamine (decarboxy-AdoMet) to putrescine (1,4-diaminobutane) to yield spermidine. In Aquifex aeolicus (strain VF5), this protein is Polyamine aminopropyltransferase 1.